The primary structure comprises 72 residues: Translation initiation factor IF-1 (72 aa).

Residues 1-72 (MSKEDSFEME…SKGRITYRAR (72 aa)) form the S1-like domain.

The protein belongs to the IF-1 family. In terms of assembly, component of the 30S ribosomal translation pre-initiation complex which assembles on the 30S ribosome in the order IF-2 and IF-3, IF-1 and N-formylmethionyl-tRNA(fMet); mRNA recruitment can occur at any time during PIC assembly.

Its subcellular location is the cytoplasm. In terms of biological role, one of the essential components for the initiation of protein synthesis. Stabilizes the binding of IF-2 and IF-3 on the 30S subunit to which N-formylmethionyl-tRNA(fMet) subsequently binds. Helps modulate mRNA selection, yielding the 30S pre-initiation complex (PIC). Upon addition of the 50S ribosomal subunit IF-1, IF-2 and IF-3 are released leaving the mature 70S translation initiation complex. This chain is Translation initiation factor IF-1, found in Pseudomonas savastanoi pv. phaseolicola (strain 1448A / Race 6) (Pseudomonas syringae pv. phaseolicola (strain 1448A / Race 6)).